We begin with the raw amino-acid sequence, 741 residues long: Eukaryotic translation initiation factor 3 subunit B (741 aa).

The span at 1-10 (MAPSFDTLSE) shows a compositional bias: polar residues. The segment at 1–21 (MAPSFDTLSEQDLHEEEEEEI) is disordered. In terms of domain architecture, RRM spans 40-126 (TFIVIDGLPI…HTLAVNKLMD (87 aa)). WD repeat units lie at residues 193–230 (AHWT…KQKQ), 232–289 (PHPF…RSFV), 303–344 (APKK…LLGK), 514–557 (IEKK…EKAE), and 572–610 (VEHY…HTFA). The tract at residues 696 to 723 (DAYGIPEDADDAKVAKDAPPVSEDQGEA) is disordered.

This sequence belongs to the eIF-3 subunit B family. In terms of assembly, component of the eukaryotic translation initiation factor 3 (eIF-3) complex.

The protein resides in the cytoplasm. In terms of biological role, RNA-binding component of the eukaryotic translation initiation factor 3 (eIF-3) complex, which is involved in protein synthesis of a specialized repertoire of mRNAs and, together with other initiation factors, stimulates binding of mRNA and methionyl-tRNAi to the 40S ribosome. The eIF-3 complex specifically targets and initiates translation of a subset of mRNAs involved in cell proliferation. The protein is Eukaryotic translation initiation factor 3 subunit B (prt1) of Aspergillus oryzae (strain ATCC 42149 / RIB 40) (Yellow koji mold).